The primary structure comprises 429 residues: Enolase (429 aa).

Residue Q163 coordinates (2R)-2-phosphoglycerate. E205 acts as the Proton donor in catalysis. Mg(2+) contacts are provided by D242, E287, and D314. Positions 339, 368, 369, and 390 each coordinate (2R)-2-phosphoglycerate. K339 acts as the Proton acceptor in catalysis.

It belongs to the enolase family. Mg(2+) is required as a cofactor.

Its subcellular location is the cytoplasm. The protein localises to the secreted. It localises to the cell surface. It catalyses the reaction (2R)-2-phosphoglycerate = phosphoenolpyruvate + H2O. It functions in the pathway carbohydrate degradation; glycolysis; pyruvate from D-glyceraldehyde 3-phosphate: step 4/5. Catalyzes the reversible conversion of 2-phosphoglycerate (2-PG) into phosphoenolpyruvate (PEP). It is essential for the degradation of carbohydrates via glycolysis. The sequence is that of Enolase from Salinibacter ruber (strain DSM 13855 / M31).